The following is a 261-amino-acid chain: uncharacterized protein (261 aa).

Positions 1 to 22 (MGYLKKVGMCISLLIVIIFVTS) are cleaved as a signal peptide. Cys23 is lipidated: N-palmitoyl cysteine. The S-diacylglycerol cysteine moiety is linked to residue Cys23.

Belongs to the staphylococcal tandem lipoprotein family.

The protein resides in the cell membrane. This is an uncharacterized protein from Staphylococcus aureus (strain bovine RF122 / ET3-1).